Here is a 113-residue protein sequence, read N- to C-terminus: U11-theraphotoxin-Hhn1a (113 aa).

The signal sequence occupies residues 1–21 (MDTVRVAFLLVLVLAVSLGQA). A propeptide spanning residues 22 to 74 (DKDENRMEMQEKTEQGKSYLDFAENLLLQKLEELEAKLLEEDSEESRNSRQKR) is cleaved from the precursor. Positions 60–69 (LEEDSEESRN) are enriched in basic and acidic residues. The interval 60-83 (LEEDSEESRNSRQKRCIGEGVPCD) is disordered. Disulfide bonds link cysteine 75-cysteine 90, cysteine 82-cysteine 95, and cysteine 89-cysteine 110.

The protein belongs to the neurotoxin 14 (magi-1) family. 01 (HNTX-16) subfamily. In terms of tissue distribution, expressed by the venom gland.

It is found in the secreted. In terms of biological role, probable ion channel inhibitor. This chain is U11-theraphotoxin-Hhn1a, found in Cyriopagopus hainanus (Chinese bird spider).